The chain runs to 260 residues: Carbonic anhydrase 2 (260 aa).

S2 bears the N-acetylserine mark. Residue S2 is modified to Phosphoserine. Positions 3-259 (HHWGYGKHNG…LKNRQVRGFP (257 aa)) constitute an Alpha-carbonic anhydrase domain. H64 functions as the Proton donor/acceptor in the catalytic mechanism. The Zn(2+) site is built by H94, H96, and H119. Phosphoserine occurs at positions 165 and 172. 198 to 199 (TT) serves as a coordination point for substrate.

The protein belongs to the alpha-carbonic anhydrase family. Interacts with SLC4A4. Interaction with SLC4A7 regulates SLC4A7 transporter activity. Zn(2+) is required as a cofactor.

It is found in the cytoplasm. The protein resides in the cell membrane. It carries out the reaction hydrogencarbonate + H(+) = CO2 + H2O. The catalysed reaction is urea = cyanamide + H2O. With respect to regulation, inhibited by acetazolamide. Its function is as follows. Catalyzes the reversible hydration of carbon dioxide. Can also hydrate cyanamide to urea. Involved in the regulation of fluid secretion into the anterior chamber of the eye. Essential for bone resorption and osteoclast differentiation. Contributes to intracellular pH regulation in the duodenal upper villous epithelium during proton-coupled peptide absorption. Stimulates the chloride-bicarbonate exchange activity of SLC26A6. This Bos taurus (Bovine) protein is Carbonic anhydrase 2 (CA2).